The chain runs to 102 residues: Spexin prohormone 1 (102 aa).

The first 26 residues, 1 to 26 (MKDLRTLAAYALALLLLATFVSHSWS), serve as a signal peptide directing secretion. A propeptide spanning residues 27–35 (APKGSFQRR) is cleaved from the precursor. Q49 is modified (glutamine amide). The propeptide occupies 50–102 (GRRFVSEDRNEGDLYDTIRLESRSQNTENLSISKAAAFLLNILQQARDEDEPY).

This sequence belongs to the spexin family. Mainly expressed in the brain and ovary. Detected bilaterally in the adult brainstem. Expressed in neurons in the dorsal habenula (dHb). In the dHb some neurons project into the interpeduncular nucleus (IPN) where expression often overlaps with galr2a and galr2b. Weakly expressed in the liver, intestine, kidney, heart and gill.

It is found in the secreted. Its subcellular location is the extracellular space. The protein localises to the cytoplasmic vesicle. The protein resides in the secretory vesicle. In terms of biological role, plays a role in the regulation of food intake and energy metabolism. May also be involved in suppressing the anxiety response by promoting the expression of serotonin-related genes such as fev, tph2 and slc6a4a. Functionally, acts as a ligand for galanin receptors galr2a and galr2b. Brain administration of the peptide inhibits food consumption and elevates levels of glucose, triacylglycerol and cholesterol in the serum. Likely to control food intake by regulating appetite related genes which includes the negative regulation of the orexigenic factor agrp. By controlling food intake it may act as a satiety factor in energy metabolism. The protein is Spexin prohormone 1 (spx) of Danio rerio (Zebrafish).